A 76-amino-acid polypeptide reads, in one-letter code: ATP synthase subunit 9, mitochondrial (76 aa).

Met-1 is subject to N-formylmethionine. The next 2 membrane-spanning stretches (helical) occupy residues 14–34 and 52–72; these read ISTI…AALI and ILGF…SFLL.

This sequence belongs to the ATPase C chain family. In terms of assembly, F-type ATPases have 2 components, CF(1) - the catalytic core - and CF(0) - the membrane proton channel. In yeast, the dimeric form of ATP synthase consists of 18 polypeptides: alpha, beta, gamma, delta, epsilon, 4 (B), 5 (OSCP), 6 (A), 8, 9 (C), d, E (Tim11), f, g, h, i, j and k.

It is found in the mitochondrion membrane. Mitochondrial membrane ATP synthase (F(1)F(0) ATP synthase or Complex V) produces ATP from ADP in the presence of a proton gradient across the membrane which is generated by electron transport complexes of the respiratory chain. F-type ATPases consist of two structural domains, F(1) - containing the extramembraneous catalytic core and F(0) - containing the membrane proton channel, linked together by a central stalk and a peripheral stalk. During catalysis, ATP synthesis in the catalytic domain of F(1) is coupled via a rotary mechanism of the central stalk subunits to proton translocation. Part of the complex F(0) domain. A homomeric c-ring of probably 10 subunits is part of the complex rotary element. This Saccharomyces paradoxus (Yeast) protein is ATP synthase subunit 9, mitochondrial (ATP9).